A 309-amino-acid polypeptide reads, in one-letter code: UDP-N-acetylenolpyruvoylglucosamine reductase (309 aa).

The FAD-binding PCMH-type domain occupies 40–204 (LGGKVPLFAI…LQATFKLKKG (165 aa)). The active site involves R182. S233 acts as the Proton donor in catalysis. The active site involves E304.

The protein belongs to the MurB family. FAD serves as cofactor.

It is found in the cytoplasm. The catalysed reaction is UDP-N-acetyl-alpha-D-muramate + NADP(+) = UDP-N-acetyl-3-O-(1-carboxyvinyl)-alpha-D-glucosamine + NADPH + H(+). It participates in cell wall biogenesis; peptidoglycan biosynthesis. Its function is as follows. Cell wall formation. This chain is UDP-N-acetylenolpyruvoylglucosamine reductase, found in Fervidobacterium nodosum (strain ATCC 35602 / DSM 5306 / Rt17-B1).